We begin with the raw amino-acid sequence, 390 residues long: Caveolae-associated protein 1 (390 aa).

Met-1 carries the N-acetylmethionine modification. The disordered stretch occupies residues 1 to 40 (MEDPTLYIVERPLPGYPDAEAPEPSSAGAQAAEEPSGAGS). The interval 1–98 (MEDPTLYIVE…IQGELSKLGK (98 aa)) is required for homotrimerization and for interaction with CAVIN2 and CAVIN3. Residues 22-40 (PEPSSAGAQAAEEPSGAGS) are compositionally biased toward low complexity. Phosphoserine occurs at positions 36, 40, and 46. The segment at 52–62 (VLVLSLLDKII) is nuclear export signal. Positions 53–75 (LVLSLLDKIIGAVDQIQLTQAQL) are leucine-zipper 1. Residue Lys-116 forms a Glycyl lysine isopeptide (Lys-Gly) (interchain with G-Cter in SUMO2) linkage. Ser-118 bears the Phosphoserine mark. Lys-122 participates in a covalent cross-link: Glycyl lysine isopeptide (Lys-Gly) (interchain with G-Cter in SUMO2). Positions 136 to 152 (KKLEVNEAELLRRRNFK) are nuclear localization signal. Residue Tyr-156 is modified to Phosphotyrosine. Lys-161 is covalently cross-linked (Glycyl lysine isopeptide (Lys-Gly) (interchain with G-Cter in SUMO1); alternate). Lys-161 participates in a covalent cross-link: Glycyl lysine isopeptide (Lys-Gly) (interchain with G-Cter in SUMO2); alternate. Lys-165 participates in a covalent cross-link: Glycyl lysine isopeptide (Lys-Gly) (interchain with G-Cter in SUMO2). A leucine-zipper 2 region spans residues 166-186 (LSISKSLKESEALPEKEGEEL). Phosphoserine is present on residues Ser-167 and Ser-169. Lys-170 is covalently cross-linked (Glycyl lysine isopeptide (Lys-Gly) (interchain with G-Cter in SUMO2)). Phosphoserine occurs at positions 171 and 175. Residues 172–181 (LKESEALPEK) show a composition bias toward basic and acidic residues. Residues 172 to 201 (LKESEALPEKEGEELGEGERPEEDAAALEL) form a disordered region. The span at 182–201 (EGEELGEGERPEEDAAALEL) shows a compositional bias: acidic residues. The stretch at 199–282 (LELSSDEAVE…RMNKLGTRLV (84 aa)) forms a coiled coil. Phosphoserine occurs at positions 202 and 203. A nuclear localization signal region spans residues 233–249 (KKAFSKEKMEKTKVRTR). The segment at 257–297 (LKTKENLEKTRHTLEKRMNKLGTRLVPAERREKLKTSRDKL) is leucine-zipper 3. Phosphoserine is present on Ser-300. Position 302 is a phosphothreonine (Thr-302). Position 308 is a phosphotyrosine (Tyr-308). A Glycyl lysine isopeptide (Lys-Gly) (interchain with G-Cter in SUMO2) cross-link involves residue Lys-326. Positions 344 to 366 (VGADDDEGGAERGEAGDLRRGSS) are disordered. Residues 352 to 365 (GAERGEAGDLRRGS) are compositionally biased toward basic and acidic residues. A phosphoserine mark is found at Ser-365, Ser-366, Ser-379, Ser-387, and Ser-389.

Belongs to the CAVIN family. Component of the CAVIN complex composed of CAVIN1, CAVIN2, CAVIN3 and CAVIN4. Homotrimer. Interacts with TTF1. Interacts with RNA polymerase I subunit POLR1A/RPA1. Binds the 3' end of pre-rRNA. Interacts with transcription factor ZNF148. Interacts with LIPE in the adipocyte cytoplasm. Interacts with CAV1 and CAVIN3. Interacts with CAVIN2. Interacts with CAVIN4 and CAV3. Post-translationally, phosphorylated. Present in active and inactive forms. Changes in phosphorylation pattern may alter activity. Phosphorylation at Tyr-156 is essential for its functionin the regulation of ribosomal transcriptional activity. Five truncated forms are found in the caveolae. These are thought to be the result of proteolysis and may be phosphorylation-dependent. In terms of processing, monoubiquitinated.

Its subcellular location is the membrane. It is found in the caveola. The protein localises to the cell membrane. It localises to the microsome. The protein resides in the endoplasmic reticulum. Its subcellular location is the cytoplasm. It is found in the cytosol. The protein localises to the mitochondrion. It localises to the nucleus. Plays an important role in caveolae formation and organization. Essential for the formation of caveolae in all tissues. Core component of the CAVIN complex which is essential for recruitment of the complex to the caveolae in presence of calveolin-1 (CAV1). Essential for normal oligomerization of CAV1. Promotes ribosomal transcriptional activity in response to metabolic challenges in the adipocytes and plays an important role in the formation of the ribosomal transcriptional loop. Dissociates transcription complexes paused by DNA-bound TTF1, thereby releasing both RNA polymerase I and pre-RNA from the template. The caveolae biogenesis pathway is required for the secretion of proteins such as GASK1A. This Homo sapiens (Human) protein is Caveolae-associated protein 1.